A 146-amino-acid polypeptide reads, in one-letter code: UPF0260 protein Ssed_2516 (146 aa).

This sequence belongs to the UPF0260 family.

The chain is UPF0260 protein Ssed_2516 from Shewanella sediminis (strain HAW-EB3).